The chain runs to 437 residues: F-box only protein 9 (437 aa).

The segment at 1-26 is disordered; it reads MSAEAEEDCHSDADRVGDEGNESPAE. Position 2 is an N-acetylalanine (serine 2). Positions 8-26 are enriched in basic and acidic residues; the sequence is DCHSDADRVGDEGNESPAE. Position 10 is a phosphoserine (histidine 10). One copy of the TPR repeat lies at 84–117; it reads ARELFLQAVEEEQNGALYEAIKFYRRAMQLVPDI. Serine 126 carries the phosphoserine modification. One can recognise an F-box domain in the interval 175-226; it reads QTHISVLPMEVLMYIFRWVVSSDLDLRSLEQLSLVCRGFYICARDPEIWRLA.

Part of the SCF (SKP1-CUL1-F-box) E3 ubiquitin-protein ligase complex SCF(FBXO9) composed of CUL1, SKP1, RBX1 and FBXO9. Interacts with TTI1 and TELO2; when TTI1 and TELO2 are phosphorylated by CK2.

It localises to the cytoplasm. The protein operates within protein modification; protein ubiquitination. Its function is as follows. Substrate recognition component of a SCF (SKP1-CUL1-F-box protein) E3 ubiquitin-protein ligase complex which mediates the ubiquitination and subsequent proteasomal degradation of target proteins and plays a role in several biological processes such as cell cycle, cell proliferation, or maintenance of chromosome stability. Ubiquitinates mTORC1-bound TTI1 and TELO2 when they are phosphorylated by CK2 following growth factor deprivation, leading to their degradation. In contrast, does not mediate ubiquitination of TTI1 and TELO2 when they are part of the mTORC2 complex. As a consequence, mTORC1 is inactivated to restrain cell growth and protein translation, while mTORC2 is the activated due to the relief of feedback inhibition by mTORC1. Plays a role in maintaining epithelial cell survival by regulating the turn-over of chromatin modulator PRMT4 through ubiquitination and degradation by the proteasomal pathway. Also regulates PPARgamma stability by facilitating PPARgamma/PPARG ubiquitination and thereby plays a role in adipocyte differentiation. The protein is F-box only protein 9 (Fbxo9) of Mus musculus (Mouse).